The sequence spans 532 residues: MPQLYIYIRLLGAYLFIISRVQGQNLDSMLHGTGMKSDSDQKKSENGVTLAPEDTLPFLKCYCSGHCPDDAINNTCITNGHCFAIIEEDDQGETTLASGCMKYEGSDFQCKDSPKAQLRRTIECCRTNLCNQYLQPTLPPVVIGPFFDGSIRWLVLLISMAVCIIAMIIFSSCFCYKHYCKSISSRRRYNRDLEQDEAFIPVGESLKDLIDQSQSSGSGSGLPLLVQRTIAKQIQMVRQVGKGRYGEVWMGKWRGEKVAVKVFFTTEEASWFRETEIYQTVLMRHENILGFIAADIKGTGSWTQLYLITDYHENGSLYDFLKCATLDTRALLKLAYSAACGLCHLHTEIYGTQGKPAIAHRDLKSKNILIKKNGSCCIADLGLAVKFNSDTNEVDVPLNTRVGTKRYMAPEVLDESLNKNHFQPYIMADIYSFGLIIWEMARRCITGGIVEEYQLPYYNMVPSDPSYEDMREVVCVKRLRPIVSNRWNSDECLRAVLKLMSECWAHNPASRLTALRIKKTLAKMVESQDVKI.

The N-terminal stretch at 1–23 (MPQLYIYIRLLGAYLFIISRVQG) is a signal peptide. Over 24–152 (QNLDSMLHGT…IGPFFDGSIR (129 aa)) the chain is Extracellular. Intrachain disulfides connect Cys-61–Cys-82, Cys-63–Cys-67, and Cys-76–Cys-100. An N-linked (GlcNAc...) asparagine glycan is attached at Asn-73. Residues 107–109 (DFQ) form a mediates specificity for BMP ligand region. Disulfide bonds link Cys-110–Cys-124 and Cys-125–Cys-130. The helical transmembrane segment at 153 to 176 (WLVLLISMAVCIIAMIIFSSCFCY) threads the bilayer. At 177-532 (KHYCKSISSR…KMVESQDVKI (356 aa)) the chain is on the cytoplasmic side. The 30-residue stretch at 204–233 (ESLKDLIDQSQSSGSGSGLPLLVQRTIAKQ) folds into the GS domain. In terms of domain architecture, Protein kinase spans 234–525 (IQMVRQVGKG…RIKKTLAKMV (292 aa)). Residues 240-248 (VGKGRYGEV) and Lys-261 contribute to the ATP site. Asp-362 serves as the catalytic Proton acceptor.

It belongs to the protein kinase superfamily. TKL Ser/Thr protein kinase family. TGFB receptor subfamily. In terms of assembly, interacts with low affinity with GDF5; positively regulates chondrocyte differentiation. Interacts with BMP4. Interacts with SCUBE3. Interacts with TSC22D1/TSC-22. Interacts with BMP2; the interaction may induce HAMP expression. Interacts with BMP6. Interacts with heterodimers composed of BMP2 and BMP6 in vitro; the interaction may induce HAMP expression. Interacts with TGFBR3. It depends on Mg(2+) as a cofactor. Requires Mn(2+) as cofactor. Post-translationally, glycosylated. Highly expressed in skeletal muscle.

The protein localises to the cell membrane. Its subcellular location is the cell surface. It catalyses the reaction L-threonyl-[receptor-protein] + ATP = O-phospho-L-threonyl-[receptor-protein] + ADP + H(+). It carries out the reaction L-seryl-[receptor-protein] + ATP = O-phospho-L-seryl-[receptor-protein] + ADP + H(+). Functionally, on ligand binding, forms a receptor complex consisting of two type II and two type I transmembrane serine/threonine kinases. Type II receptors phosphorylate and activate type I receptors which autophosphorylate, then bind and activate SMAD transcriptional regulators. Receptor for BMP2, BMP4, GDF5 and GDF6. Positively regulates chondrocyte differentiation through GDF5 interaction. Mediates induction of adipogenesis by GDF6. May promote the expression of HAMP, potentially via its interaction with BMP2. The chain is Bone morphogenetic protein receptor type-1A (BMPR1A) from Homo sapiens (Human).